We begin with the raw amino-acid sequence, 441 residues long: Transducin-like enhancer protein 7 (441 aa).

Disordered stretches follow at residues 1–77 (MSGE…QWHL) and 91–119 (PDAQ…SSSS). Positions 27 to 49 (ESSGVSSQPEPQVQQQLGSLLGV) are enriched in low complexity. Residues 62-76 (PADQETSTVTQQQWH) are compositionally biased toward polar residues. Positions 108 to 119 (GSEVGQPYSSSS) are enriched in low complexity. WD repeat units lie at residues 156–194 (FHGK…AGEK), 204–243 (HPQD…QVRA), 247–285 (STGP…LIRK), 286–325 (HEVP…RLHQ), and 409–441 (EESS…QLLY).

The protein belongs to the WD repeat Groucho/TLE family.

The sequence is that of Transducin-like enhancer protein 7 from Homo sapiens (Human).